Reading from the N-terminus, the 128-residue chain is Large ribosomal subunit protein bL12 (128 aa).

It belongs to the bacterial ribosomal protein bL12 family. As to quaternary structure, homodimer. Part of the ribosomal stalk of the 50S ribosomal subunit. Forms a multimeric L10(L12)X complex, where L10 forms an elongated spine to which 2 to 4 L12 dimers bind in a sequential fashion. Binds GTP-bound translation factors.

Functionally, forms part of the ribosomal stalk which helps the ribosome interact with GTP-bound translation factors. Is thus essential for accurate translation. The chain is Large ribosomal subunit protein bL12 from Thermotoga petrophila (strain ATCC BAA-488 / DSM 13995 / JCM 10881 / RKU-1).